The following is a 263-amino-acid chain: Hydroxyacylglutathione hydrolase (263 aa).

7 residues coordinate Zn(2+): H60, H62, D64, H65, H120, D137, and H175.

Belongs to the metallo-beta-lactamase superfamily. Glyoxalase II family. As to quaternary structure, monomer. The cofactor is Zn(2+).

The enzyme catalyses an S-(2-hydroxyacyl)glutathione + H2O = a 2-hydroxy carboxylate + glutathione + H(+). Its pathway is secondary metabolite metabolism; methylglyoxal degradation; (R)-lactate from methylglyoxal: step 2/2. Its function is as follows. Thiolesterase that catalyzes the hydrolysis of S-D-lactoyl-glutathione to form glutathione and D-lactic acid. In Shewanella pealeana (strain ATCC 700345 / ANG-SQ1), this protein is Hydroxyacylglutathione hydrolase.